The following is a 400-amino-acid chain: Pectinesterase B (400 aa).

Residues threonine 171 and glutamine 205 each contribute to the substrate site. Residue aspartate 228 is the Proton donor of the active site. The active-site Nucleophile is aspartate 261. Substrate is bound by residues arginine 325 and tryptophan 327.

Belongs to the pectinesterase family.

The enzyme catalyses [(1-&gt;4)-alpha-D-galacturonosyl methyl ester](n) + n H2O = [(1-&gt;4)-alpha-D-galacturonosyl](n) + n methanol + n H(+). The protein operates within glycan metabolism; pectin degradation; 2-dehydro-3-deoxy-D-gluconate from pectin: step 1/5. The polypeptide is Pectinesterase B (pemB) (Pectobacterium parmentieri).